The sequence spans 300 residues: Arrestin domain-containing protein 4 (300 aa).

2 short sequence motifs (PPxY motif) span residues 231-234 (PPNY) and 276-279 (PPLY).

This sequence belongs to the arrestin family. Interacts with ADRB2. Interacts (via PPxY motifs) with ITCH, NEDD4L and WWP2. Interacts with AVPR2. Identified in a complex containing at least ARRDC4, AVPR2 and HGS. Interacts with SLC11A2; controls the incorporation of SLC11A2 into extracellular vesicles through an ubiquitination-dependent mechanism. Interacts with TRIM65.

The protein localises to the early endosome. It is found in the cell membrane. It localises to the cytoplasmic vesicle. Functionally, functions as an adapter recruiting ubiquitin-protein ligases to their specific substrates. Plays a role in endocytosis of activated G protein-coupled receptors (GPCRs) Through an ubiquitination-dependent mechanism also plays a role in the incorporation of SLC11A2 into extracellular vesicles. May play a role in glucose uptake. Participates in innate immune response by promoting IFIH1/MDA5 activation through interaction with TRIM65. This chain is Arrestin domain-containing protein 4 (Arrdc4), found in Rattus norvegicus (Rat).